The primary structure comprises 321 residues: Merozoite surface protein 9 (321 aa).

Basic and acidic residues predominate over residues 58–74; the sequence is KEDNQAVDTKSMEEPKV. 3 disordered regions span residues 58–88, 113–141, and 263–321; these read KEDNQAVDTKSMEEPKVKAQPALRGVEPTED, NNTPNVVPPTQSKKKNKNETVSGMDENFD, and IEAE…EEKK. Over residues 113-122 the composition is skewed to low complexity; it reads NNTPNVVPPT. Over residues 273 to 321 the composition is skewed to basic and acidic residues; sequence KNKEEEEKEKEKEKEKEEKEKEEKEKEKEEKEKEEKEKEEKEEKEEEKK.

It belongs to the plasmodium ABRA family. As to quaternary structure, forms a complex composed of MSP1, MSP6, MSP7, MSP9 and MSP3; within the complex, MSP6 and MSP9 mediate the binding to the host erythrocyte. Interacts with MSP1 subunits p19 and p42; the interaction is direct. Interacts with host SLC4A1/Band 3 protein (via the 5ABC region). MSP1 subunits p19 or p42, and MSP9 form a co-ligand complex that interacts with host SLC4A1/Band 3 protein. In terms of processing, not glycosylated.

The protein resides in the cell membrane. It is found in the parasitophorous vacuole lumen. It localises to the secreted. Functionally, during the asexual blood stage, involved in the sialic acid-independent (SAID) merozoite invasion of host erythrocytes by binding to host SLC4A1/Band 3 protein on the surface of the host erythrocyte. The polypeptide is Merozoite surface protein 9 (Plasmodium falciparum (isolate FC27 / Papua New Guinea)).